Consider the following 233-residue polypeptide: Aspartate/glutamate leucyltransferase (233 aa).

It belongs to the R-transferase family. Bpt subfamily.

The protein localises to the cytoplasm. The enzyme catalyses N-terminal L-glutamyl-[protein] + L-leucyl-tRNA(Leu) = N-terminal L-leucyl-L-glutamyl-[protein] + tRNA(Leu) + H(+). The catalysed reaction is N-terminal L-aspartyl-[protein] + L-leucyl-tRNA(Leu) = N-terminal L-leucyl-L-aspartyl-[protein] + tRNA(Leu) + H(+). Functionally, functions in the N-end rule pathway of protein degradation where it conjugates Leu from its aminoacyl-tRNA to the N-termini of proteins containing an N-terminal aspartate or glutamate. The chain is Aspartate/glutamate leucyltransferase from Vibrio parahaemolyticus serotype O3:K6 (strain RIMD 2210633).